A 513-amino-acid chain; its full sequence is uncharacterized protein (513 aa).

A run of 13 helical transmembrane segments spans residues 3 to 23, 47 to 67, 71 to 91, 129 to 149, 153 to 173, 177 to 197, 233 to 253, 273 to 293, 320 to 340, 374 to 394, 395 to 415, 424 to 444, and 462 to 482; these read MTAFLLFLAIVGLTLIITYFA, LAIAGDYMSAASFLGIAGMIA, FDGFFYSIGFLVAYLVVLYIV, TFYMIAQLVGAGALIKLLLGL, AAVLIVGVLMTIYVVFGGMIA, VQIIKAVLLMAGTLVISIIVF, ETLSLNLALVLGTAGLPHILI, WIIGVFYIMTVFLGFGAAAFV, FLFAFVSAIAFATILAVVTGL, ASVAVSVLSILLAIFAQSLNV, AFLVALAFAVAASANLPLIVF, ASGALWGSLTGLISALVLVSM, and LIPLSNPGIISIPLGFLGAWL.

It belongs to the sodium:solute symporter (SSF) (TC 2.A.21) family.

It is found in the cell membrane. This is an uncharacterized protein from Bacillus subtilis (strain 168).